Consider the following 750-residue polypeptide: Photosystem I P700 chlorophyll a apoprotein A1 (750 aa).

The next 8 helical transmembrane spans lie at 70–93 (VFSA…FHGA), 156–179 (LYCT…FHYH), 195–219 (LNHH…HVSL), 291–309 (IIHH…GHMY), 346–369 (WHAQ…HHMY), 385–411 (LSLF…IFMV), 433–455 (AIIS…LYIH), and 531–549 (FLVH…LILL). The [4Fe-4S] cluster site is built by Cys-573 and Cys-582. 2 helical membrane-spanning segments follow: residues 589 to 610 (HVFL…HFSW) and 664 to 686 (LSAY…MFLF). Chlorophyll a' is bound at residue His-675. The chlorophyll a site is built by Met-683 and Tyr-691. A phylloquinone-binding site is contributed by Trp-692. Residues 724 to 744 (AVGVTHYLLGGIATTWAFFLA) form a helical membrane-spanning segment.

The protein belongs to the PsaA/PsaB family. The PsaA/B heterodimer binds the P700 chlorophyll special pair and subsequent electron acceptors. PSI consists of a core antenna complex that captures photons, and an electron transfer chain that converts photonic excitation into a charge separation. The eukaryotic PSI reaction center is composed of at least 11 subunits. It depends on P700 is a chlorophyll a/chlorophyll a' dimer, A0 is one or more chlorophyll a, A1 is one or both phylloquinones and FX is a shared 4Fe-4S iron-sulfur center. as a cofactor.

Its subcellular location is the plastid. The protein localises to the chloroplast thylakoid membrane. It carries out the reaction reduced [plastocyanin] + hnu + oxidized [2Fe-2S]-[ferredoxin] = oxidized [plastocyanin] + reduced [2Fe-2S]-[ferredoxin]. In terms of biological role, psaA and PsaB bind P700, the primary electron donor of photosystem I (PSI), as well as the electron acceptors A0, A1 and FX. PSI is a plastocyanin-ferredoxin oxidoreductase, converting photonic excitation into a charge separation, which transfers an electron from the donor P700 chlorophyll pair to the spectroscopically characterized acceptors A0, A1, FX, FA and FB in turn. Oxidized P700 is reduced on the lumenal side of the thylakoid membrane by plastocyanin. The protein is Photosystem I P700 chlorophyll a apoprotein A1 of Phaseolus vulgaris (Kidney bean).